Consider the following 362-residue polypeptide: Protein OCA4 (362 aa).

Its function is as follows. Required for replication of Brome mosaic virus (BMV). The sequence is that of Protein OCA4 (OCA4) from Saccharomyces cerevisiae (strain ATCC 204508 / S288c) (Baker's yeast).